The primary structure comprises 205 residues: Large ribosomal subunit protein uL4 (205 aa).

The interval Arg45 to Tyr97 is disordered. Residues Gly60–Gly71 are compositionally biased toward basic residues.

It belongs to the universal ribosomal protein uL4 family. Part of the 50S ribosomal subunit.

One of the primary rRNA binding proteins, this protein initially binds near the 5'-end of the 23S rRNA. It is important during the early stages of 50S assembly. It makes multiple contacts with different domains of the 23S rRNA in the assembled 50S subunit and ribosome. In terms of biological role, forms part of the polypeptide exit tunnel. The sequence is that of Large ribosomal subunit protein uL4 from Lactobacillus gasseri (strain ATCC 33323 / DSM 20243 / BCRC 14619 / CIP 102991 / JCM 1131 / KCTC 3163 / NCIMB 11718 / NCTC 13722 / AM63).